A 141-amino-acid polypeptide reads, in one-letter code: MRIPPRLVALAGAAAVAATLIAGPVAAAAPASHAVAASSAASASVKAVGRVCYSALPSQAHDTLDLIDEGGPFPYSQDGVVFQNREGLLPAHSTGYYHEYTVITPGSPTRGARRIITGQQWQEDYYTADHYASFRRVDFAC.

The segment at residues Met1–Ala36 is a signal peptide (or 43). Cys52 and Cys141 form a disulfide bridge. The Proton acceptor role is filled by Glu99. The active-site Proton donor is the His130.

It belongs to the ribonuclease N1/T1 family.

The protein resides in the secreted. It catalyses the reaction [RNA] containing guanosine + H2O = an [RNA fragment]-3'-guanosine-3'-phosphate + a 5'-hydroxy-ribonucleotide-3'-[RNA fragment].. In Kitasatospora aureofaciens (Streptomyces aureofaciens), this protein is Guanyl-specific ribonuclease Sa3 (rnaSA3).